Consider the following 302-residue polypeptide: 33 kDa chaperonin (302 aa).

2 disulfides stabilise this stretch: Cys-234–Cys-236 and Cys-267–Cys-270.

Belongs to the HSP33 family. Post-translationally, under oxidizing conditions two disulfide bonds are formed involving the reactive cysteines. Under reducing conditions zinc is bound to the reactive cysteines and the protein is inactive.

It localises to the cytoplasm. Functionally, redox regulated molecular chaperone. Protects both thermally unfolding and oxidatively damaged proteins from irreversible aggregation. Plays an important role in the bacterial defense system toward oxidative stress. This is 33 kDa chaperonin from Neisseria gonorrhoeae (strain ATCC 700825 / FA 1090).